The sequence spans 201 residues: LexA repressor (201 aa).

A DNA-binding region (H-T-H motif) is located at residues 28 to 48 (LREIGGHLGINGTLGVMKHLD). Residues serine 120 and lysine 157 each act as for autocatalytic cleavage activity in the active site.

It belongs to the peptidase S24 family. In terms of assembly, homodimer.

It carries out the reaction Hydrolysis of Ala-|-Gly bond in repressor LexA.. In terms of biological role, represses a number of genes involved in the response to DNA damage (SOS response), including recA and lexA. In the presence of single-stranded DNA, RecA interacts with LexA causing an autocatalytic cleavage which disrupts the DNA-binding part of LexA, leading to derepression of the SOS regulon and eventually DNA repair. In Geotalea uraniireducens (strain Rf4) (Geobacter uraniireducens), this protein is LexA repressor.